We begin with the raw amino-acid sequence, 270 residues long: Phosphatidate cytidylyltransferase (270 aa).

The next 7 membrane-spanning stretches (helical) occupy residues 19–39 (LWLTWVGGVGFTLFSIAIGLA), 53–73 (TAFSRLFGWAWLIVTGILLIL), 76–96 (GALLTIGFLVAGCAILLVTQW), 101–121 (GWPAAGLFYAGFSALSLSLLR), 126–146 (FGFTTIVFLFAVVWSTDIAAY), 183–203 (LVASLVAAPGGWGVPVLALLL), and 248–268 (ALLYLFGAIFAEPDVPSAIFF).

It belongs to the CDS family.

Its subcellular location is the cell inner membrane. The enzyme catalyses a 1,2-diacyl-sn-glycero-3-phosphate + CTP + H(+) = a CDP-1,2-diacyl-sn-glycerol + diphosphate. It functions in the pathway phospholipid metabolism; CDP-diacylglycerol biosynthesis; CDP-diacylglycerol from sn-glycerol 3-phosphate: step 3/3. The chain is Phosphatidate cytidylyltransferase (cdsA) from Brucella melitensis biotype 1 (strain ATCC 23456 / CCUG 17765 / NCTC 10094 / 16M).